The chain runs to 361 residues: Phosphoserine aminotransferase (361 aa).

L-glutamate is bound at residue R42. Pyridoxal 5'-phosphate-binding positions include 76–77 (AR), W102, T153, D173, and Q196. K197 is modified (N6-(pyridoxal phosphate)lysine). 238–239 (NT) serves as a coordination point for pyridoxal 5'-phosphate.

Belongs to the class-V pyridoxal-phosphate-dependent aminotransferase family. SerC subfamily. Homodimer. Requires pyridoxal 5'-phosphate as cofactor.

The protein resides in the cytoplasm. It catalyses the reaction O-phospho-L-serine + 2-oxoglutarate = 3-phosphooxypyruvate + L-glutamate. The catalysed reaction is 4-(phosphooxy)-L-threonine + 2-oxoglutarate = (R)-3-hydroxy-2-oxo-4-phosphooxybutanoate + L-glutamate. It functions in the pathway amino-acid biosynthesis; L-serine biosynthesis; L-serine from 3-phospho-D-glycerate: step 2/3. It participates in cofactor biosynthesis; pyridoxine 5'-phosphate biosynthesis; pyridoxine 5'-phosphate from D-erythrose 4-phosphate: step 3/5. Catalyzes the reversible conversion of 3-phosphohydroxypyruvate to phosphoserine and of 3-hydroxy-2-oxo-4-phosphonooxybutanoate to phosphohydroxythreonine. The protein is Phosphoserine aminotransferase of Pectobacterium carotovorum subsp. carotovorum (strain PC1).